Reading from the N-terminus, the 142-residue chain is Hemoglobin A subunit alpha-1 (142 aa).

One can recognise a Globin domain in the interval 2–142; it reads VLTAGDKANV…VATALTSKYR (141 aa). O2 is bound at residue His59. Heme b is bound at residue His88.

Belongs to the globin family. Tetramer of alpha-1, alpha-2 and two identical beta chains. Red blood cells.

Its function is as follows. Involved in oxygen transport from the lung to the various peripheral tissues. This Aldabrachelys gigantea (Aldabra giant tortoise) protein is Hemoglobin A subunit alpha-1.